A 207-amino-acid chain; its full sequence is Alpha-1-acid glycoprotein 1 (207 aa).

Residues 1 to 18 (MALHTVLIILSLLPMLEA) form the signal peptide. Position 19 is a pyrrolidone carboxylic acid (Gln19). Asn25, Asn34, Asn76, Asn94, and Asn104 each carry an N-linked (GlcNAc...) asparagine glycan. Cys91 and Cys184 are disulfide-bonded.

This sequence belongs to the calycin superfamily. Lipocalin family.

Its subcellular location is the secreted. Its function is as follows. Functions as a transport protein in the blood stream. Binds various ligands in the interior of its beta-barrel domain. Appears to function in modulating the activity of the immune system during the acute-phase reaction. The sequence is that of Alpha-1-acid glycoprotein 1 (Orm1) from Mus musculus (Mouse).